The following is an 818-amino-acid chain: Sodium/hydrogen exchanger 1 (818 aa).

Over 1–98 (MLLWSGICGL…FPVLGIDYTH (98 aa)) the chain is Extracellular. Residues 39 to 76 (PSPTASTIRGSEPPRERSIGDVTTAPPELAPESRPVNH) are disordered. The N-linked (GlcNAc...) asparagine glycan is linked to Asn75. Residues 99 to 121 (VRTPFEISLWILLACLMKIGFHV) traverse the membrane as a helical segment. The Cytoplasmic portion of the chain corresponds to 122 to 130 (IPTISSIVP). Residues 131–148 (ESCLLIVVGLLVGGLIKA) form a helical membrane-spanning segment. The Extracellular segment spans residues 149 to 158 (VGETPPFLQS). A helical membrane pass occupies residues 159–176 (EVFFLFLLPPIILDAGYF). Topologically, residues 177–186 (LPLRQFTENL) are cytoplasmic. A helical transmembrane segment spans residues 187 to 215 (GTILIFAVVGTLWNAFFLGGLMYAVCLVG). The Extracellular portion of the chain corresponds to 216-222 (GEQINNI). A helical transmembrane segment spans residues 223-249 (GLLDNLLFGSIISAVDPVAVLAVFEEI). Residues 250–252 (HIN) lie on the Cytoplasmic side of the membrane. A helical membrane pass occupies residues 253–283 (ELLHILVFGESLLNDAVTVVLYHLFEEFANY). Residues 284-287 (DRVG) are Extracellular-facing. The helical transmembrane segment at 288–322 (IVDIVLGFLSFFVVSLGGVFVGVVYGVIAAFTSRF) threads the bilayer. Residues 323–328 (TSHIRV) lie on the Cytoplasmic side of the membrane. The helical transmembrane segment at 329–341 (IEPLFVFLYSYMA) threads the bilayer. Topologically, residues 342-350 (YLSAELFHL) are extracellular. Residues 351–371 (SGIMALIASGVVMRPYVEANI) form a helical membrane-spanning segment. The Cytoplasmic portion of the chain corresponds to 372-373 (SH). The helical transmembrane segment at 374 to 404 (KSHTTIKYFLKMWSSVSETLIFIFLGVSTVA) threads the bilayer. Topologically, residues 405-410 (GSHHWN) are extracellular. Residues 411 to 438 (WTFVISTLLFCLIARVLGVLGLTWFINK) traverse the membrane as a helical segment. At 439–444 (FRIVKL) the chain is on the cytoplasmic side. The chain crosses the membrane as a helical span at residues 445 to 469 (TPKDQFIIAYGGLRGAIAFSLGHLL). Residues 470–475 (DKNHFP) are Extracellular-facing. Residues 476 to 505 (MCDLFLTAIITVIFFTVFVQGMTIRPLVDL) traverse the membrane as a helical segment. The interval 503–545 (VDLLAVKKKQETKRSINEEIHTQFLDHLLTGIEDICGHYGHHH) is interaction with TESC. Residues 506 to 818 (LAVKKKQETK…EGEPFIPKGQ (313 aa)) lie on the Cytoplasmic side of the membrane. Positions 509–516 (KKKQETKR) are PI(4,5)P2-binding region. Positions 515 to 545 (KRSINEEIHTQFLDHLLTGIEDICGHYGHHH) are interaction with CHP2. The tract at residues 540-545 (HYGHHH) is confers pH-dependent PI(4,5)P2 binding. The PI(4,5)P2-binding region stretch occupies residues 552–560 (RFNKKYVKK). Residues Ser599 and Ser602 each carry the phosphoserine modification. Thr603 bears the Phosphothreonine mark. Phosphoserine occurs at positions 605 and 648. The segment at 633–818 (KILRNNLQKT…EGEPFIPKGQ (186 aa)) is interaction with TESC. The interval 633–818 (KILRNNLQKT…EGEPFIPKGQ (186 aa)) is interaction with CALM1. The tract at residues 684–687 (LTVP) is interaction with PPP3CA. 3 positions are modified to phosphoserine: Ser693, Ser697, and Ser703. Residues 715-720 (PVITID) form an interaction with PPP3CA region. Residues Ser723, Ser726, and Ser729 each carry the phosphoserine modification. The disordered stretch occupies residues 739-818 (GKVLGLSREP…EGEPFIPKGQ (80 aa)). Residues Thr752 and Thr782 each carry the phosphothreonine modification. Over residues 785–794 (PSDSPSSQRI) the composition is skewed to polar residues. Residues Ser788, Ser790, and Ser799 each carry the phosphoserine modification.

It belongs to the monovalent cation:proton antiporter 1 (CPA1) transporter (TC 2.A.36) family. As to quaternary structure, homodimer; dimerization is crucial for its function. Oligomer. Interacts with CALM in a calcium-dependent manner. Interacts with TESC. Interacts (via the juxtamembrane region of the cytoplasmic C-terminal domain) with CHP1; the interaction occurs at the plasma membrane in a calcium-dependent manner. Interacts with CHP2; the interaction occurs in a calcium-dependent manner. Interacts with EZR; regulates the cytoskeletal interactions of SLC9A1 and promotes stress fiber formation. In terms of processing, ubiquitinated, leading to its degradation by the proteasome. Ubiquitination is reduced by CHP1. O-glycosylated. Post-translationally, palmitoylated; may play a major role in SLC9A1 regulation. In terms of processing, phosphorylation at Thr-782 increases SLC9A1 activity. Specifically dephosphorylated at Thr-782 by PPP3CA that negatively regulates SLC9A1 activity. Phosphorylation at Ser-648 by AKT1 reduces SLC9A1 binding to CALM1.

It is found in the cell membrane. It localises to the basolateral cell membrane. The catalysed reaction is Na(+)(in) + H(+)(out) = Na(+)(out) + H(+)(in). The enzyme catalyses Li(+)(out) + H(+)(in) = Li(+)(in) + H(+)(out). It carries out the reaction Li(+)(in) + Na(+)(out) = Li(+)(out) + Na(+)(in). Its activity is regulated as follows. Activated at acidic pHs. Inhibited by cariporide and eniporide. Inhibited by amiloride and 5-amino-substituted derivatives. Phosphatidylinositol 4,5-bisphosphate (PI(4,5)P2) and phosphatidylinositol 3,4,5-trisphosphate (PI(3,4,5)P3) bind and differentially regulate SLC9A1 activity. In terms of biological role, electroneutral Na(+) /H(+) antiporter that extrudes Na(+) in exchange for external protons driven by the inward sodium ion chemical gradient, protecting cells from acidification that occurs from metabolism. Exchanges intracellular H(+) ions for extracellular Na(+) in 1:1 stoichiometry. Plays a key role in maintening intracellular pH neutral and cell volume, and thus is important for cell growth, proliferation, migration and survival. In addition, can transport lithium Li(+) and also functions as a Na(+)/Li(+) antiporter. SLC9A1 also functions in membrane anchoring and organization of scaffolding complexes that coordinate signaling inputs. This chain is Sodium/hydrogen exchanger 1 (SLC9A1), found in Sus scrofa (Pig).